The primary structure comprises 92 residues: Phospholemman (92 aa).

The first 20 residues, 1–20 (MASLGHILVFCVGLLTMAKA), serve as a signal peptide directing secretion. Residues 21-35 (ESPKEHDPFTYDYQS) are Extracellular-facing. Residues 36–56 (LQIGGLVIAGILFILGILIVL) traverse the membrane as a helical segment. The Cytoplasmic segment spans residues 57-92 (SRRCRCKFNQQQRTGEPDEEEGTFRSSIRRLSTRRR). Cysteine 60 carries S-palmitoyl cysteine lipidation. An S-glutathionyl cysteine; alternate modification is found at cysteine 62. Cysteine 62 is lipidated: S-palmitoyl cysteine; alternate. A disordered region spans residues 65 to 92 (NQQQRTGEPDEEEGTFRSSIRRLSTRRR). Phosphothreonine is present on threonine 79. Serine 82 carries the phosphoserine modification. Serine 83 bears the Phosphoserine; by PKA and PKC mark. Residues 83-92 (SIRRLSTRRR) show a composition bias toward basic residues. The residue at position 88 (serine 88) is a Phosphoserine; by PKA. Residue threonine 89 is modified to Phosphothreonine; by PKC.

The protein belongs to the FXYD family. As to quaternary structure, homotetramer. Monomer. Regulatory subunit of the sodium/potassium-transporting ATPase (NKA) which is composed of a catalytic alpha subunit, an auxiliary non-catalytic beta subunit and an additional regulatory subunit. The monomeric form associates with NKA while the oligomeric form does not. Interacts with the catalytic alpha-1 subunit ATP1A1. Also interacts with the catalytic alpha-2 and alpha-3 subunits ATP1A2 and ATP1A3. Very little interaction with ATP1A1, ATP1A2 or ATP1A3 when phosphorylated at Ser-83. Interacts with the non-catalytic beta-1 subunit ATP1B1. Oxidative stress decreases interaction with ATP1A1 but increases interaction with ATP1B1. In terms of processing, major plasma membrane substrate for cAMP-dependent protein kinase (PKA) and protein kinase C (PKC) in several different tissues. Phosphorylated in response to insulin and adrenergic stimulation. Phosphorylation at Ser-88 stimulates sodium/potassium-transporting ATPase activity while the unphosphorylated form inhibits sodium/potassium-transporting ATPase activity. Phosphorylation increases tetramerization, decreases binding to ATP1A1 and reduces inhibition of ATP1A1 activity. Phosphorylation at Ser-83 leads to greatly reduced interaction with ATP1A1, ATP1A2 and ATP1A3. May be phosphorylated by DMPK. Palmitoylation increases half-life and stability and is enhanced upon phosphorylation at Ser-88 by PKA. As to expression, highest expression in skeletal muscle and heart. Moderate levels in brain, placenta, lung, liver, pancreas, uterus, bladder, prostate, small intestine and colon with mucosal lining. Very low levels in kidney, colon and small intestine without mucosa, prostate without endothelial lining, spleen, and testis.

Its subcellular location is the cell membrane. The protein localises to the sarcolemma. It is found in the apical cell membrane. The protein resides in the membrane. It localises to the caveola. Its subcellular location is the T-tubule. Its function is as follows. Associates with and regulates the activity of the sodium/potassium-transporting ATPase (NKA) which transports Na(+) out of the cell and K(+) into the cell. Inhibits NKA activity in its unphosphorylated state and stimulates activity when phosphorylated. Reduces glutathionylation of the NKA beta-1 subunit ATP1B1, thus reversing glutathionylation-mediated inhibition of ATP1B1. Contributes to female sexual development by maintaining the excitability of neurons which secrete gonadotropin-releasing hormone. In Homo sapiens (Human), this protein is Phospholemman.